Reading from the N-terminus, the 212-residue chain is ATP phosphoribosyltransferase (212 aa).

Belongs to the ATP phosphoribosyltransferase family. Short subfamily. Heteromultimer composed of HisG and HisZ subunits.

Its subcellular location is the cytoplasm. It catalyses the reaction 1-(5-phospho-beta-D-ribosyl)-ATP + diphosphate = 5-phospho-alpha-D-ribose 1-diphosphate + ATP. It functions in the pathway amino-acid biosynthesis; L-histidine biosynthesis; L-histidine from 5-phospho-alpha-D-ribose 1-diphosphate: step 1/9. Catalyzes the condensation of ATP and 5-phosphoribose 1-diphosphate to form N'-(5'-phosphoribosyl)-ATP (PR-ATP). Has a crucial role in the pathway because the rate of histidine biosynthesis seems to be controlled primarily by regulation of HisG enzymatic activity. The sequence is that of ATP phosphoribosyltransferase from Prochlorococcus marinus (strain AS9601).